The following is a 411-amino-acid chain: Lissencephaly-1 homolog (411 aa).

The 33-residue stretch at 9 to 41 (QREELNQAIADYLGSNGYGDSLETFRKEADVST) folds into the LisH domain. Positions 56 to 83 (TSVIRLQKKVMELEAKLTEAEKEVIEGA) form a coiled coil. 7 WD repeats span residues 106–147 (GHRA…RSLK), 148–187 (GHTD…ECVK), 191–230 (GHDH…CVKT), 233–272 (GHRE…CKVE), 275–334 (DHEH…CLLT), 337–376 (GHDN…CMKT), and 379–411 (AHQH…WECR).

Belongs to the WD repeat LIS1/nudF family.

The protein resides in the cytoplasm. It localises to the cytoskeleton. It is found in the microtubule organizing center. Its subcellular location is the centrosome. Its function is as follows. Positively regulates the activity of the minus-end directed microtubule motor protein dynein. May enhance dynein-mediated microtubule sliding by targeting dynein to the microtubule plus end. Required for several dynein- and microtubule-dependent processes. The chain is Lissencephaly-1 homolog from Drosophila persimilis (Fruit fly).